A 2144-amino-acid chain; its full sequence is Polyketide synthase-like protein Preu9 (2144 aa).

Residues 1-250 (MYALHLAVNA…GANAHCIIDH (250 aa)) form the Ketosynthase family 3 (KS3) domain. The segment at 276–325 (QNGHLNEFAANGTTNAPSRDHRNGITDGRADGNTNGHPNANGDVGGNPIN) is disordered. Residues 293-305 (SRDHRNGITDGRA) are compositionally biased toward basic and acidic residues. The interval 435-738 (FVFTGQGAQW…KSPVEQILKS (304 aa)) is malonyl-CoA:ACP transacylase (MAT). The segment at 827 to 965 (HDLLGSKVVG…GCVKLIIKSS (139 aa)) is N-terminal hotdog fold. The dehydratase (DH) domain stretch occupies residues 827–1137 (HDLLGSKVVG…ERLRCVSYSR (311 aa)). The region spanning 827–1141 (HDLLGSKVVG…CVSYSRISSD (315 aa)) is the PKS/mFAS DH domain. Residue His-859 is the Proton acceptor; for dehydratase activity of the active site. The segment at 979–1141 (TLRPVDVRAW…CVSYSRISSD (163 aa)) is C-terminal hotdog fold. The active-site Proton donor; for dehydratase activity is the Asp-1050. The tract at residues 1305–1494 (TGIYPQLHRI…GLDVVLDDFP (190 aa)) is methyltransferase (MT) domain. The tract at residues 1731 to 2042 (GVPNSLCFAS…LANMIGKLVV (312 aa)) is enoyl reductase (ER) domain.

In terms of biological role, polyketide synthase-like protein that lacks important domains such as carrier domain and does probably not function as a polyketide synthase. The protein is Polyketide synthase-like protein Preu9 of Preussia isomera (Coprophilous fungus).